The following is a 197-amino-acid chain: Dephospho-CoA kinase (197 aa).

A DPCK domain is found at 2 to 197 (IVGLTGGIAS…YQQILSLNAA (196 aa)). 10–15 (ASGKTL) lines the ATP pocket.

This sequence belongs to the CoaE family.

The protein localises to the cytoplasm. It carries out the reaction 3'-dephospho-CoA + ATP = ADP + CoA + H(+). The protein operates within cofactor biosynthesis; coenzyme A biosynthesis; CoA from (R)-pantothenate: step 5/5. Catalyzes the phosphorylation of the 3'-hydroxyl group of dephosphocoenzyme A to form coenzyme A. This chain is Dephospho-CoA kinase, found in Dichelobacter nodosus (Bacteroides nodosus).